A 210-amino-acid polypeptide reads, in one-letter code: Guanylate kinase (210 aa).

Residues 23–203 enclose the Guanylate kinase-like domain; it reads GRVVVLSGPS…ACAELVSLLV (181 aa). 30–37 lines the ATP pocket; the sequence is GPSAVGKS.

Belongs to the guanylate kinase family.

It localises to the cytoplasm. It carries out the reaction GMP + ATP = GDP + ADP. Essential for recycling GMP and indirectly, cGMP. In Mycobacterium leprae (strain TN), this protein is Guanylate kinase (gmk).